The sequence spans 410 residues: Arginine deiminase (410 aa).

Catalysis depends on Cys400, which acts as the Amidino-cysteine intermediate.

It belongs to the arginine deiminase family.

Its subcellular location is the cytoplasm. The enzyme catalyses L-arginine + H2O = L-citrulline + NH4(+). Its pathway is amino-acid degradation; L-arginine degradation via ADI pathway; carbamoyl phosphate from L-arginine: step 1/2. This is Arginine deiminase from Levilactobacillus brevis (strain ATCC 367 / BCRC 12310 / CIP 105137 / JCM 1170 / LMG 11437 / NCIMB 947 / NCTC 947) (Lactobacillus brevis).